A 317-amino-acid polypeptide reads, in one-letter code: Malate dehydrogenase (317 aa).

Residues 13 to 18 (GAGNIG) and D38 each bind NAD(+). Residues R87 and R93 each contribute to the substrate site. Residues N100 and 123-125 (VTN) each bind NAD(+). Substrate is bound by residues N125 and R156. The Proton acceptor role is filled by H180.

This sequence belongs to the LDH/MDH superfamily. MDH type 3 family.

It catalyses the reaction (S)-malate + NAD(+) = oxaloacetate + NADH + H(+). Catalyzes the reversible oxidation of malate to oxaloacetate. The sequence is that of Malate dehydrogenase from Anaplasma marginale (strain St. Maries).